The following is a 164-amino-acid chain: N5-carboxyaminoimidazole ribonucleotide mutase (164 aa).

Positions 13, 16, and 43 each coordinate substrate.

This sequence belongs to the AIR carboxylase family. Class I subfamily.

The enzyme catalyses 5-carboxyamino-1-(5-phospho-D-ribosyl)imidazole + H(+) = 5-amino-1-(5-phospho-D-ribosyl)imidazole-4-carboxylate. It functions in the pathway purine metabolism; IMP biosynthesis via de novo pathway; 5-amino-1-(5-phospho-D-ribosyl)imidazole-4-carboxylate from 5-amino-1-(5-phospho-D-ribosyl)imidazole (N5-CAIR route): step 2/2. Its function is as follows. Catalyzes the conversion of N5-carboxyaminoimidazole ribonucleotide (N5-CAIR) to 4-carboxy-5-aminoimidazole ribonucleotide (CAIR). In Haemophilus influenzae (strain ATCC 51907 / DSM 11121 / KW20 / Rd), this protein is N5-carboxyaminoimidazole ribonucleotide mutase.